We begin with the raw amino-acid sequence, 89 residues long: uncharacterized protein (89 aa).

To M.jannaschii MJ1436.

This is an uncharacterized protein from Methanothermobacter thermautotrophicus (strain ATCC 29096 / DSM 1053 / JCM 10044 / NBRC 100330 / Delta H) (Methanobacterium thermoautotrophicum).